Reading from the N-terminus, the 326-residue chain is Iron-sulfur cluster assembly SufBD family protein PH0883 (326 aa).

It belongs to the iron-sulfur cluster assembly SufBD family.

In Pyrococcus horikoshii (strain ATCC 700860 / DSM 12428 / JCM 9974 / NBRC 100139 / OT-3), this protein is Iron-sulfur cluster assembly SufBD family protein PH0883.